Consider the following 254-residue polypeptide: 3-deoxy-manno-octulosonate cytidylyltransferase (254 aa).

The protein belongs to the KdsB family.

It localises to the cytoplasm. The catalysed reaction is 3-deoxy-alpha-D-manno-oct-2-ulosonate + CTP = CMP-3-deoxy-beta-D-manno-octulosonate + diphosphate. It participates in nucleotide-sugar biosynthesis; CMP-3-deoxy-D-manno-octulosonate biosynthesis; CMP-3-deoxy-D-manno-octulosonate from 3-deoxy-D-manno-octulosonate and CTP: step 1/1. It functions in the pathway bacterial outer membrane biogenesis; lipopolysaccharide biosynthesis. Its function is as follows. Activates KDO (a required 8-carbon sugar) for incorporation into bacterial lipopolysaccharide in Gram-negative bacteria. This chain is 3-deoxy-manno-octulosonate cytidylyltransferase, found in Pseudomonas syringae pv. tomato (strain ATCC BAA-871 / DC3000).